The following is a 449-amino-acid chain: Cyclin-B1-5 (449 aa).

2 disordered regions span residues 1–37 and 98–147; these read MATRHQRAAAAPQPANRGAAVAAGKQKAAATAAAGRP and PARK…GGSA. Composition is skewed to low complexity over residues 8-37 and 136-147; these read AAAAPQPANRGAAVAAGKQKAAATAAAGRP and SEGAGSSSGGSA.

Belongs to the cyclin family. Cyclin AB subfamily.

The sequence is that of Cyclin-B1-5 (CYCB1-5) from Oryza sativa subsp. japonica (Rice).